Consider the following 150-residue polypeptide: Deoxyuridine 5'-triphosphate nucleotidohydrolase (150 aa).

Residues Arg67–Ser69, Asn80, and Val84–Asp86 each bind substrate.

This sequence belongs to the dUTPase family. It depends on Mg(2+) as a cofactor.

The catalysed reaction is dUTP + H2O = dUMP + diphosphate + H(+). The protein operates within pyrimidine metabolism; dUMP biosynthesis; dUMP from dCTP (dUTP route): step 2/2. In terms of biological role, this enzyme is involved in nucleotide metabolism: it produces dUMP, the immediate precursor of thymidine nucleotides and it decreases the intracellular concentration of dUTP so that uracil cannot be incorporated into DNA. This Lactococcus lactis subsp. lactis (strain IL1403) (Streptococcus lactis) protein is Deoxyuridine 5'-triphosphate nucleotidohydrolase (dut).